The primary structure comprises 569 residues: Alpha-amylase (569 aa).

The first 28 residues, 1–28 (MARKTVAAALALVAGAAVAVTGNAPAQA), serve as a signal peptide directing secretion. Residues Asn-120, Gln-166, and Asp-175 each coordinate Ca(2+). Asp-205 (nucleophile) is an active-site residue. His-209 lines the Ca(2+) pocket. Glu-232 acts as the Proton donor in catalysis. The region spanning 468–569 (TTPPATSGAS…QLVLNDTFRS (102 aa)) is the CBM20 domain.

It belongs to the glycosyl hydrolase 13 family. As to quaternary structure, monomer. The cofactor is Ca(2+).

It carries out the reaction Endohydrolysis of (1-&gt;4)-alpha-D-glucosidic linkages in polysaccharides containing three or more (1-&gt;4)-alpha-linked D-glucose units.. The protein is Alpha-amylase (aml) of Streptomyces violaceus (Streptomyces venezuelae).